The sequence spans 530 residues: Ubiquitin carboxyl-terminal hydrolase 17-like protein 12 (530 aa).

The 296-residue stretch at 80-375 folds into the USP domain; that stretch reads AGLQNMGNTC…QAYVLFYIQK (296 aa). Cys89 (nucleophile) is an active-site residue. His334 (proton acceptor) is an active-site residue. Composition is skewed to basic and acidic residues over residues 382–392 and 398–412; these read SESVSRGREPR and DTDR…KRDH. Disordered stretches follow at residues 382-412 and 477-530; these read SESV…KRDH and NHHP…LVCQ. A compositionally biased stretch (low complexity) spans 484–495; it reads SSLLKLSSTTPT. Over residues 496 to 505 the composition is skewed to polar residues; that stretch reads HQESMNTGTL. The segment covering 510 to 524 has biased composition (basic residues); it reads GRARRSKGKNKHSKR.

This sequence belongs to the peptidase C19 family. USP17 subfamily.

The protein resides in the nucleus. It localises to the endoplasmic reticulum. It catalyses the reaction Thiol-dependent hydrolysis of ester, thioester, amide, peptide and isopeptide bonds formed by the C-terminal Gly of ubiquitin (a 76-residue protein attached to proteins as an intracellular targeting signal).. Deubiquitinating enzyme that removes conjugated ubiquitin from specific proteins to regulate different cellular processes that may include cell proliferation, progression through the cell cycle, apoptosis, cell migration, and the cellular response to viral infection. This is Ubiquitin carboxyl-terminal hydrolase 17-like protein 12 (USP17L12) from Homo sapiens (Human).